Reading from the N-terminus, the 236-residue chain is Alpha-S2-casein (236 aa).

The first 15 residues, 1–15, serve as a signal peptide directing secretion; sequence MKFFIFTCLLAVALA. Phosphoserine is present on residues Ser23, Ser24, Ser25, Ser28, Ser47, Ser80, Ser81, Ser82, Ser85, Ser157, and Ser169. The tract at residues 72–93 is disordered; it reads PTEVYSSSSSSEESAKFPTERE. The span at 84–93 shows a compositional bias: basic and acidic residues; the sequence is ESAKFPTERE.

It belongs to the alpha-casein family. In terms of processing, there are at least three different forms found in milk, with varying degrees of phosphorylation. These include form 10-P which is phosphorylated at ten sites that have not been determined, form 11-P which is phosphorylated at eleven sites and form 12-P which is phosphorylated at twelve sites. Mammary gland specific. Secreted in milk.

The protein localises to the secreted. Important role in the capacity of milk to transport calcium phosphate. This Equus asinus (Donkey) protein is Alpha-S2-casein.